The sequence spans 296 residues: Cytidine deaminase (296 aa).

CMP/dCMP-type deaminase domains are found at residues 47 to 167 and 186 to 296; these read ELNE…FGPS and DSND…VEPE. Residue 88-90 coordinates substrate; that stretch reads NIE. His101 is a binding site for Zn(2+). Glu103 acts as the Proton donor in catalysis. The Zn(2+) site is built by Cys128 and Cys131.

This sequence belongs to the cytidine and deoxycytidylate deaminase family. As to quaternary structure, homodimer. Zn(2+) serves as cofactor.

The enzyme catalyses cytidine + H2O + H(+) = uridine + NH4(+). It catalyses the reaction 2'-deoxycytidine + H2O + H(+) = 2'-deoxyuridine + NH4(+). This enzyme scavenges exogenous and endogenous cytidine and 2'-deoxycytidine for UMP synthesis. The sequence is that of Cytidine deaminase from Shewanella halifaxensis (strain HAW-EB4).